The chain runs to 537 residues: MSSHSHNGSVGQPLGSGPGFLGWEPVDPEAGRPLQPTQGPGLQMVAKGQPVRLSPGGSRGHPQEQEEEEEEEEEEDKTGSGKPPTVSHRLGHRRALFEKRKRLSDYALIFGMFGIVVMVTETELSWGVYTKESLCSFALKCLISLSTVILLGLVILYHAREIQLFLVDNGADDWRIAMTWERVSLISLELVVCAIHPVPGHYRFTWTARLAFSLVPSAAEADLDVLLSIPMFLRLYLLARVMLLHSRIFTDASSRSIGALNRVTFNTRFVTKTLMTICPGTVLLVFSVSSWIVAAWTVRVCERYHDKQEVTSNFLGAMWLISITFLSIGYGDMVPHTYCGKGVCLLTGIMGAGCTALVVAVVARKLELTKAEKHVHNFMMDTQLTKRVKNAAANVLRETWLIYKHTRLVKKPDQGRVRKHQRKFLQAIHQAQKLRSVKIEQGKVNDQANTLAELAKAQSIAYEVVSELQAQQEELEARLAALESRLDVLGASLQALPGLIAQAICPLPPPWPGPGHLATATHSPQSHWLPTMGSDCG.

Positions 1-10 (MSSHSHNGSV) are enriched in polar residues. The segment at 1–90 (MSSHSHNGSV…GKPPTVSHRL (90 aa)) is disordered. A compositionally biased stretch (acidic residues) spans 65–76 (QEEEEEEEEEED). Residues 108–128 (LIFGMFGIVVMVTETELSWGV) form a helical membrane-spanning segment. A helical membrane pass occupies residues 137–157 (FALKCLISLSTVILLGLVILY). Residues 176 to 196 (IAMTWERVSLISLELVVCAIH) traverse the membrane as a helical segment. The helical transmembrane segment at 225-245 (VLLSIPMFLRLYLLARVMLLH) threads the bilayer. Residues 274–294 (LMTICPGTVLLVFSVSSWIVA) form a helical membrane-spanning segment. The segment at residues 314–334 (FLGAMWLISITFLSIGYGDMV) is an intramembrane region (pore-forming). Positions 343 to 363 (VCLLTGIMGAGCTALVVAVVA) are segment S6. The tract at residues 381–460 (DTQLTKRVKN…LAELAKAQSI (80 aa)) is calmodulin-binding.

It belongs to the potassium channel KCNN family. KCa2.1/KCNN1 subfamily. As to quaternary structure, homodimer. Heteromultimer with KCNN2 and KCNN3. The complex is composed of 4 channel subunits each of which binds to a calmodulin subunit which regulates the channel activity through calcium-binding. Interacts with calmodulin. In terms of tissue distribution, highest expression in brain and liver with lower levels in heart, testis, kidney and colon. In colon, detected in smooth muscle cells. Expressed in atrial and ventricular myocytes with higher levels in atrial myocytes.

Its subcellular location is the membrane. The protein resides in the cytoplasm. It is found in the myofibril. The protein localises to the sarcomere. It localises to the z line. The enzyme catalyses K(+)(in) = K(+)(out). With respect to regulation, inhibited by bee venom neurotoxin apamin. Inhibited by d-tubocurarine and tetraethylammonium (TEA). Its function is as follows. Small conductance calcium-activated potassium channel that mediates the voltage-independent transmembrane transfer of potassium across the cell membrane through a constitutive interaction with calmodulin which binds the intracellular calcium allowing its opening. The current is characterized by a voltage-independent activation, an intracellular calcium concentration increase-dependent activation and a single-channel conductance of about 3 picosiemens. Also presents an inwardly rectifying current, thus reducing its already small outward conductance of potassium ions, which is particularly the case when the membrane potential displays positive values, above + 20 mV. Activation is followed by membrane hyperpolarization. Thought to regulate neuronal excitability by contributing to the slow component of synaptic afterhyperpolarization. The chain is Small conductance calcium-activated potassium channel protein 1 from Mus musculus (Mouse).